The following is a 379-amino-acid chain: Cytochrome b (379 aa).

The next 4 membrane-spanning stretches (helical) occupy residues 33-53, 77-98, 113-133, and 178-198; these read FGSL…FLAM, WLIR…YLHI, WNIG…GYVL, and FFAF…IHLL. Histidine 83 and histidine 97 together coordinate heme b. The heme b site is built by histidine 182 and histidine 196. An a ubiquinone-binding site is contributed by histidine 201. 4 helical membrane passes run 226–246, 288–308, 320–340, and 347–367; these read YKDL…ALFY, LGGV…PILH, ASQL…WIGG, and YIII…VLNP.

It belongs to the cytochrome b family. In terms of assembly, the cytochrome bc1 complex contains 3 respiratory subunits (MT-CYB, CYC1 and UQCRFS1), 2 core proteins (UQCRC1 and UQCRC2) and probably 6 low-molecular weight proteins. Heme b serves as cofactor.

Its subcellular location is the mitochondrion inner membrane. Functionally, component of the ubiquinol-cytochrome c reductase complex (complex III or cytochrome b-c1 complex) that is part of the mitochondrial respiratory chain. The b-c1 complex mediates electron transfer from ubiquinol to cytochrome c. Contributes to the generation of a proton gradient across the mitochondrial membrane that is then used for ATP synthesis. This is Cytochrome b (mt-cyb) from Anguilla reinhardtii (Speckled longfin eel).